The primary structure comprises 309 residues: Glutaminase (309 aa).

Substrate-binding residues include Ser64, Asn114, Glu160, Asn167, Tyr191, Tyr243, and Val261.

Belongs to the glutaminase family. As to quaternary structure, homotetramer.

The enzyme catalyses L-glutamine + H2O = L-glutamate + NH4(+). The sequence is that of Glutaminase from Methylorubrum populi (strain ATCC BAA-705 / NCIMB 13946 / BJ001) (Methylobacterium populi).